The sequence spans 576 residues: QVTLTESGPALVKPKQPLTLTCTFSGFSLSTSRMRVSWIRRPPGKALEWLARIDDDDKFYWSTSLRTRLSISKNDSKNQVVLIMINVNPVDTATYYCARVVNSVMAGYYYYYMDVWGKGTTVTVSSGSASAPTLFPLVSCENSNPSSTVAVGCLAQDFLPDSITFSWKYNQSQKISSTRGFPSVLRGGKYAATSQVLLPSKDVMQGTDEHVCKWVQHPNGNKQKNVPLPVIAELPPKVSVFVPPRDGFFGNPRKSKLICQATGFSPRQVWSLREGKQVGSGVTTDQVQAEAKESGPTTYKVTSTLTIKESDWLGESMFTCRVDHRGLTFQQNASSMCVPDQDTAIRVFAIPPSFASIFLTKSTKLTCLVTDLTTYDSVTISWTREENGAVKTHTNISESHPNATFSAVGEASICEDDDWSGERFTCTVTHTDLPSPLKQTISRPKGVALHRPDVYLLPPAREQLNLRESATITCLVTGFSPADVFVQWMQRGEPLSPEKYVTSAPMPEPQAPGRYFAHSILTVSEEEWNTGQTYTCVVAHEALPNRVTERTVDKSTGKPTLYNVSLVMSDTAGTCY.

A Pyrrolidone carboxylic acid modification is found at glutamine 1. Ig-like domains are found at residues 1–97, 132–212, 236–334, 352–442, and 452–553; these read QVTL…TYYC, PTLF…EHVC, PKVS…QNAS, PSFA…QTIS, and PDVY…RTVD. Residues 1–124 are variable (V) domain, involved in antigen recognition; it reads QVTLTESGPA…VWGKGTTVTV (124 aa). Intrachain disulfides connect cysteine 22-cysteine 97, cysteine 153-cysteine 212, and cysteine 259-cysteine 320. Asparagine 74 and asparagine 170 each carry an N-linked (GlcNAc...) asparagine glycan. The constant (C) domain stretch occupies residues 125 to 576; that stretch reads SSGSASAPTL…VMSDTAGTCY (452 aa). Residues asparagine 332, asparagine 395, and asparagine 402 are each glycosylated (N-linked (GlcNAc...) asparagine). Cystine bridges form between cysteine 367/cysteine 426 and cysteine 474/cysteine 536. A glycan (N-linked (GlcNAc...) asparagine) is linked at asparagine 563.

As to quaternary structure, immunoglobulins are composed of two identical heavy chains and two identical light chains; disulfide-linked. It is found almost exclusively as a homopentamer in the serum. Membrane-bound IgM molecules are non-covalently associated with heterodimer of CD79A and CD79B.

Its subcellular location is the secreted. It localises to the cell membrane. In terms of biological role, immunoglobulins, also known as antibodies, are membrane-bound or secreted glycoproteins produced by B lymphocytes. In the recognition phase of humoral immunity, the membrane-bound immunoglobulins serve as receptors which, upon binding of a specific antigen, trigger the clonal expansion and differentiation of B lymphocytes into immunoglobulins-secreting plasma cells. Secreted immunoglobulins mediate the effector phase of humoral immunity, which results in the elimination of bound antigens. The antigen binding site is formed by the variable domain of one heavy chain, together with that of its associated light chain. Thus, each immunoglobulin has two antigen binding sites with remarkable affinity for a particular antigen. The variable domains are assembled by a process called V-(D)-J rearrangement and can then be subjected to somatic hypermutations which, after exposure to antigen and selection, allow affinity maturation for a particular antigen. IgM antibodies play an important role in primary defense mechanisms. They have been shown to be involved in early recognition of external invaders like bacteria and viruses, cellular waste and modified self, as well as in recognition and elimination of precancerous and cancerous lesions. The membrane-bound form is found in the majority of normal B cells alongside with IgD. Membrane-bound IgM induces the phosphorylation of CD79A and CD79B by the Src family of protein tyrosine kinases. It may cause death of cells by apoptosis. It is also found in soluble form, which represents about 30% of the total serum immunoglobulins where it is found almost exclusively as a homopentamer. After the antigen binds to the B cell receptor, the secreted form is secreted in large amounts (, PubMed:16895553). This is Immunoglobulin mu heavy chain from Homo sapiens (Human).